Reading from the N-terminus, the 283-residue chain is MGQKIHPTGFRLAVSRNWASRWYAGNSNFATMLNEDLKVRAYLKTKLKNASVGRVVIERPAKNARITIYSSRPGVVIGKKGEDIEVLKSALTKMMGVPVHVNIEEIRKPETDAQLIADSIAQQLEKRIMFRRAMKRAMQNAMRLGAQGIKIMSSGRLNGIEIARKEWYREGRVPLHTLRADIDYGFGEAETTYGIIGIKVWVYKGDRLANGEAPVIDVASDDDKKRRGPRRDDGKPSGRPRAPRPEGQPGAAAPGSAPAAKRVRAKKPDGAVDAAVSAEKAGE.

A KH type-2 domain is found at Val39–Arg107. Residues Ala219–Glu283 form a disordered region. Positions Asp221–Pro236 are enriched in basic and acidic residues. Over residues Ser237–Ala260 the composition is skewed to low complexity.

It belongs to the universal ribosomal protein uS3 family. Part of the 30S ribosomal subunit. Forms a tight complex with proteins S10 and S14.

Its function is as follows. Binds the lower part of the 30S subunit head. Binds mRNA in the 70S ribosome, positioning it for translation. This chain is Small ribosomal subunit protein uS3, found in Janthinobacterium sp. (strain Marseille) (Minibacterium massiliensis).